Here is a 187-residue protein sequence, read N- to C-terminus: Putative manganese efflux pump MntP (187 aa).

Helical transmembrane passes span 3–23, 35–55, 56–76, 107–127, 129–149, and 166–186; these read FYSL…VSLC, HYLI…TIGY, FIGI…AFIL, LALA…FAFL, VNLL…CIIA, and LLGG…HLFF.

The protein belongs to the MntP (TC 9.B.29) family.

The protein localises to the cell inner membrane. In terms of biological role, probably functions as a manganese efflux pump. The sequence is that of Putative manganese efflux pump MntP from Campylobacter jejuni subsp. doylei (strain ATCC BAA-1458 / RM4099 / 269.97).